The chain runs to 965 residues: Iron-responsive element-binding protein 2 (965 aa).

The interval 142-170 (NAPNPGGGEAQKPTAKLSPLKGQPRKLPC) is disordered. [4Fe-4S] cluster contacts are provided by C514, C580, and C583.

It belongs to the aconitase/IPM isomerase family. The cofactor is [4Fe-4S] cluster. Ubiquitinated and degraded by the proteasome in presence of high level of iron and oxygen.

The protein resides in the cytoplasm. RNA-binding protein that binds to iron-responsive elements (IRES), which are stem-loop structures found in the 5'-UTR of ferritin, and delta aminolevulinic acid synthase mRNAs, and in the 3'-UTR of transferrin receptor mRNA. Binding to the IRE element in ferritin results in the repression of its mRNA translation. Binding of the protein to the transferrin receptor mRNA inhibits the degradation of this otherwise rapidly degraded mRNA. The chain is Iron-responsive element-binding protein 2 (IREB2) from Gallus gallus (Chicken).